A 257-amino-acid polypeptide reads, in one-letter code: Thiazole synthase (257 aa).

Lys-95 serves as the catalytic Schiff-base intermediate with DXP. Residues Gly-156, 182-183, and 204-205 each bind 1-deoxy-D-xylulose 5-phosphate; these read AG and NT.

This sequence belongs to the ThiG family. Homotetramer. Forms heterodimers with either ThiH or ThiS.

The protein localises to the cytoplasm. It catalyses the reaction [ThiS sulfur-carrier protein]-C-terminal-Gly-aminoethanethioate + 2-iminoacetate + 1-deoxy-D-xylulose 5-phosphate = [ThiS sulfur-carrier protein]-C-terminal Gly-Gly + 2-[(2R,5Z)-2-carboxy-4-methylthiazol-5(2H)-ylidene]ethyl phosphate + 2 H2O + H(+). Its pathway is cofactor biosynthesis; thiamine diphosphate biosynthesis. In terms of biological role, catalyzes the rearrangement of 1-deoxy-D-xylulose 5-phosphate (DXP) to produce the thiazole phosphate moiety of thiamine. Sulfur is provided by the thiocarboxylate moiety of the carrier protein ThiS. In vitro, sulfur can be provided by H(2)S. In Fusobacterium nucleatum subsp. nucleatum (strain ATCC 25586 / DSM 15643 / BCRC 10681 / CIP 101130 / JCM 8532 / KCTC 2640 / LMG 13131 / VPI 4355), this protein is Thiazole synthase.